A 490-amino-acid chain; its full sequence is Aspartyl/glutamyl-tRNA(Asn/Gln) amidotransferase subunit B (490 aa).

The protein belongs to the GatB/GatE family. GatB subfamily. Heterotrimer of A, B and C subunits.

The catalysed reaction is L-glutamyl-tRNA(Gln) + L-glutamine + ATP + H2O = L-glutaminyl-tRNA(Gln) + L-glutamate + ADP + phosphate + H(+). It carries out the reaction L-aspartyl-tRNA(Asn) + L-glutamine + ATP + H2O = L-asparaginyl-tRNA(Asn) + L-glutamate + ADP + phosphate + 2 H(+). In terms of biological role, allows the formation of correctly charged Asn-tRNA(Asn) or Gln-tRNA(Gln) through the transamidation of misacylated Asp-tRNA(Asn) or Glu-tRNA(Gln) in organisms which lack either or both of asparaginyl-tRNA or glutaminyl-tRNA synthetases. The reaction takes place in the presence of glutamine and ATP through an activated phospho-Asp-tRNA(Asn) or phospho-Glu-tRNA(Gln). In Synechococcus sp. (strain JA-3-3Ab) (Cyanobacteria bacterium Yellowstone A-Prime), this protein is Aspartyl/glutamyl-tRNA(Asn/Gln) amidotransferase subunit B.